A 206-amino-acid polypeptide reads, in one-letter code: Large ribosomal subunit protein uL4 (206 aa).

It belongs to the universal ribosomal protein uL4 family. As to quaternary structure, part of the 50S ribosomal subunit.

Its function is as follows. One of the primary rRNA binding proteins, this protein initially binds near the 5'-end of the 23S rRNA. It is important during the early stages of 50S assembly. It makes multiple contacts with different domains of the 23S rRNA in the assembled 50S subunit and ribosome. In terms of biological role, forms part of the polypeptide exit tunnel. This Desulfatibacillum aliphaticivorans protein is Large ribosomal subunit protein uL4.